A 79-amino-acid polypeptide reads, in one-letter code: Sec-independent protein translocase protein TatA (79 aa).

Residues 1 to 21 (MGGFTSIWHWVIVLLVIVLLF) form a helical membrane-spanning segment. The disordered stretch occupies residues 48–79 (EEEAKNEPKTLDAQVAQTKVHETSEIKSKQES). A compositionally biased stretch (basic and acidic residues) spans 66–79 (KVHETSEIKSKQES).

This sequence belongs to the TatA/E family. The Tat system comprises two distinct complexes: a TatABC complex, containing multiple copies of TatA, TatB and TatC subunits, and a separate TatA complex, containing only TatA subunits. Substrates initially bind to the TatABC complex, which probably triggers association of the separate TatA complex to form the active translocon.

Its subcellular location is the cell inner membrane. Functionally, part of the twin-arginine translocation (Tat) system that transports large folded proteins containing a characteristic twin-arginine motif in their signal peptide across membranes. TatA could form the protein-conducting channel of the Tat system. In Helicobacter pylori (strain Shi470), this protein is Sec-independent protein translocase protein TatA.